Consider the following 119-residue polypeptide: Large ribosomal subunit protein uL18 (119 aa).

The segment at 1–22 (MGHVEKVARRHKIKTRSKARGQ) is disordered. Residues 8–19 (ARRHKIKTRSKA) show a composition bias toward basic residues.

It belongs to the universal ribosomal protein uL18 family. Part of the 50S ribosomal subunit; part of the 5S rRNA/L5/L18/L25 subcomplex. Contacts the 5S and 23S rRNAs.

In terms of biological role, this is one of the proteins that bind and probably mediate the attachment of the 5S RNA into the large ribosomal subunit, where it forms part of the central protuberance. The protein is Large ribosomal subunit protein uL18 of Chlorobium phaeobacteroides (strain BS1).